A 205-amino-acid chain; its full sequence is MGDPKLPRRMWRKPKRPFNYDLKMEELRTLGTFGLRTKRELWKAHTELSRVRNQARSLLALGQEVRERKEPVLLRSLARIGLVGKDASLDDVLNLQVNDLLGRRLQTIVMKKLGFSTPYQARQAVVHGHITISDRVVTIPSYTVYVEEEGDIKLTGGSAFATILEKSKRAEAAAREAAAEAAEAEQAAAQAAAPTPAPAAAAPKQ.

Residues 103–173 (RRLQTIVMKK…LEKSKRAEAA (71 aa)) form the S4 RNA-binding domain. Residues 174–205 (AREAAAEAAEAEQAAAQAAAPTPAPAAAAPKQ) are disordered. Residues 179–205 (AEAAEAEQAAAQAAAPTPAPAAAAPKQ) are compositionally biased toward low complexity.

This sequence belongs to the universal ribosomal protein uS4 family. As to quaternary structure, part of the 30S ribosomal subunit. Contacts protein S5. The interaction surface between S4 and S5 is involved in control of translational fidelity.

Its function is as follows. One of the primary rRNA binding proteins, it binds directly to 16S rRNA where it nucleates assembly of the body of the 30S subunit. Functionally, with S5 and S12 plays an important role in translational accuracy. This is Small ribosomal subunit protein uS4 from Cenarchaeum symbiosum (strain A).